Reading from the N-terminus, the 169-residue chain is Ribosome maturation factor RimM (169 aa).

In terms of domain architecture, PRC barrel spans 95–168 (EGNYYIFQIV…KMKVELLEGL (74 aa)).

The protein belongs to the RimM family. As to quaternary structure, binds ribosomal protein uS19.

It localises to the cytoplasm. An accessory protein needed during the final step in the assembly of 30S ribosomal subunit, possibly for assembly of the head region. Essential for efficient processing of 16S rRNA. May be needed both before and after RbfA during the maturation of 16S rRNA. It has affinity for free ribosomal 30S subunits but not for 70S ribosomes. The sequence is that of Ribosome maturation factor RimM from Desulforamulus reducens (strain ATCC BAA-1160 / DSM 100696 / MI-1) (Desulfotomaculum reducens).